Reading from the N-terminus, the 293-residue chain is Glutamyl-Q tRNA(Asp) synthetase (293 aa).

Residues 9–13 (RFAPS) and E45 each bind L-glutamate. Positions 12 to 22 (PSPSGSLHFGS) match the 'HIGH' region motif. The Zn(2+) site is built by C101, C103, Y115, and C119. L-glutamate-binding residues include Y172 and R190. Residues 228 to 232 (KLSKQ) carry the 'KMSKS' region motif. K231 contributes to the ATP binding site.

This sequence belongs to the class-I aminoacyl-tRNA synthetase family. GluQ subfamily. Zn(2+) is required as a cofactor.

In terms of biological role, catalyzes the tRNA-independent activation of glutamate in presence of ATP and the subsequent transfer of glutamate onto a tRNA(Asp). Glutamate is transferred on the 2-amino-5-(4,5-dihydroxy-2-cyclopenten-1-yl) moiety of the queuosine in the wobble position of the QUC anticodon. The polypeptide is Glutamyl-Q tRNA(Asp) synthetase (Shewanella frigidimarina (strain NCIMB 400)).